We begin with the raw amino-acid sequence, 233 residues long: Large ribosomal subunit protein uL1 (233 aa).

The protein belongs to the universal ribosomal protein uL1 family. Part of the 50S ribosomal subunit.

Functionally, binds directly to 23S rRNA. The L1 stalk is quite mobile in the ribosome, and is involved in E site tRNA release. Its function is as follows. Protein L1 is also a translational repressor protein, it controls the translation of the L11 operon by binding to its mRNA. The protein is Large ribosomal subunit protein uL1 of Psychrobacter arcticus (strain DSM 17307 / VKM B-2377 / 273-4).